The chain runs to 794 residues: Protein IQ-DOMAIN 32 (794 aa).

The interval 15–101 is disordered; sequence CSGGDDTSAD…QSFSVDEKKS (87 aa). Polar residues-rich tracts occupy residues 23–33 and 56–65; these read ADPNSTALENK and SVVSETTPAS. Phosphoserine occurs at positions 78, 80, 142, 193, and 195. Over residues 80-95 the composition is skewed to polar residues; the sequence is SPDNNNVSEKQQQSFS. IQ domains follow at residues 214–242 and 243–265; these read DESV…KVIK and LQAA…CVQA. The segment at 230 to 241 is calmodulin-binding; the sequence is ARRELLRSKKVI. Positions 277–296 are disordered; it reads HSTKDGSRVSATSDKSEPNA. The residue at position 369 (Ser-369) is a Phosphoserine. A disordered region spans residues 375-417; that stretch reads VNSDSTVENKTETDMPSYEASKVEGQNVELSETEKMSQYDSPE. Ser-459 carries the phosphoserine modification. 2 disordered regions span residues 472–555 and 578–794; these read ELTS…RVEA and ATSM…KWQR. Over residues 473–486 the composition is skewed to polar residues; that stretch reads LTSSTGSNKAMTLS. Over residues 487–500 the composition is skewed to basic and acidic residues; that stretch reads SKDDVLGEEGKTDI. Ser-502 and Ser-544 each carry phosphoserine. 2 stretches are compositionally biased toward basic and acidic residues: residues 539–555 and 585–607; these read TLEK…RVEA and EDPK…HHEP. Residues 643-654 show a composition bias toward low complexity; the sequence is SQATPASQASSS. The Nuclear localization signal signature appears at 657-664; sequence ARKGKSEK. Residues 768–786 are compositionally biased toward polar residues; that stretch reads NGKQVSPRIQRSASQAQQG.

The protein belongs to the IQD family. Binds to multiple calmodulin (CaM) in the presence of Ca(2+) and CaM-like proteins.

It localises to the nucleus. The protein resides in the cytoplasm. It is found in the cytoskeleton. Its function is as follows. May be involved in cooperative interactions with calmodulins or calmodulin-like proteins. Recruits calmodulin proteins to microtubules, thus being a potential scaffold in cellular signaling and trafficking. May associate with nucleic acids and regulate gene expression at the transcriptional or post-transcriptional level. The protein is Protein IQ-DOMAIN 32 of Arabidopsis thaliana (Mouse-ear cress).